The chain runs to 295 residues: MIEVLTTTDSQKLLHQLNALLEQESRCQPKVCGLRLIESAHDNGLRMTARLRDFEVKDLLSLTQFFGFDTETFSLAVNLLDRFLSKMKVQPKHLGCVGLSCFYLAVKSIEEERNVPLATDLIRISQYRFTVSDLMRMEKIVLEKVCWKVKATTAFQFLQLYYSLLQENLPLERRNNINFERLEAQLKACHCRIIFSKAKPSVLALSIIALEIQAQKCVELTEGIECLQKLSKINGRDLTFWQELVSKCLTEYSSNKCSKPNVQKLKWIVSGRTARQLKHSYYRIAHLPTIPEMVP.

This sequence belongs to the cyclin family. Cyclin G subfamily.

The protein localises to the nucleus. May play a role in growth regulation. Is associated with G2/M phase arrest in response to DNA damage. May be an intermediate by which p53 mediates its role as an inhibitor of cellular proliferation. This chain is Cyclin-G1 (CCNG1), found in Pongo abelii (Sumatran orangutan).